The primary structure comprises 144 residues: Bacilliredoxin BCE_2233 (144 aa).

It belongs to the bacilliredoxin family.

The polypeptide is Bacilliredoxin BCE_2233 (Bacillus cereus (strain ATCC 10987 / NRS 248)).